The following is a 469-amino-acid chain: Glutamate--tRNA ligase (469 aa).

The 'HIGH' region motif lies at 9–19 (PSPTGMFHVGG). 4 residues coordinate Zn(2+): Cys-100, Cys-102, Cys-122, and Asp-124. The short motif at 232–236 (KLSKR) is the 'KMSKS' region element. Residue Lys-235 participates in ATP binding.

The protein belongs to the class-I aminoacyl-tRNA synthetase family. Glutamate--tRNA ligase type 1 subfamily. In terms of assembly, monomer. Zn(2+) serves as cofactor.

It is found in the cytoplasm. The catalysed reaction is tRNA(Glu) + L-glutamate + ATP = L-glutamyl-tRNA(Glu) + AMP + diphosphate. In terms of biological role, catalyzes the attachment of glutamate to tRNA(Glu) in a two-step reaction: glutamate is first activated by ATP to form Glu-AMP and then transferred to the acceptor end of tRNA(Glu). This chain is Glutamate--tRNA ligase, found in Salinispora arenicola (strain CNS-205).